A 473-amino-acid polypeptide reads, in one-letter code: 3-isopropylmalate dehydratase large subunit (473 aa).

Residues C354, C414, and C417 each contribute to the [4Fe-4S] cluster site.

This sequence belongs to the aconitase/IPM isomerase family. LeuC type 1 subfamily. Heterodimer of LeuC and LeuD. The cofactor is [4Fe-4S] cluster.

It carries out the reaction (2R,3S)-3-isopropylmalate = (2S)-2-isopropylmalate. It functions in the pathway amino-acid biosynthesis; L-leucine biosynthesis; L-leucine from 3-methyl-2-oxobutanoate: step 2/4. In terms of biological role, catalyzes the isomerization between 2-isopropylmalate and 3-isopropylmalate, via the formation of 2-isopropylmaleate. The polypeptide is 3-isopropylmalate dehydratase large subunit (Mycobacterium bovis (strain ATCC BAA-935 / AF2122/97)).